A 541-amino-acid chain; its full sequence is Chaperonin GroEL 2 (541 aa).

ATP contacts are provided by residues 29 to 32 (TLGP), 86 to 90 (DGTTT), glycine 413, 476 to 478 (NAA), and aspartate 492.

This sequence belongs to the chaperonin (HSP60) family. As to quaternary structure, forms a cylinder of 14 subunits composed of two heptameric rings stacked back-to-back. Interacts with the co-chaperonin GroES.

The protein localises to the secreted. It localises to the capsule. Its subcellular location is the cell surface. The protein resides in the cell wall. It catalyses the reaction ATP + H2O + a folded polypeptide = ADP + phosphate + an unfolded polypeptide.. In terms of biological role, together with its co-chaperonin GroES, plays an essential role in assisting protein folding. The GroEL-GroES system forms a nano-cage that allows encapsulation of the non-native substrate proteins and provides a physical environment optimized to promote and accelerate protein folding. This Mycolicibacterium vanbaalenii (strain DSM 7251 / JCM 13017 / BCRC 16820 / KCTC 9966 / NRRL B-24157 / PYR-1) (Mycobacterium vanbaalenii) protein is Chaperonin GroEL 2.